A 447-amino-acid polypeptide reads, in one-letter code: N-succinylarginine dihydrolase (447 aa).

Substrate is bound by residues 19–28, Asn-110, and 137–138; these read AGLSFGNEAS and HR. Residue Glu-174 is part of the active site. Arg-212 contributes to the substrate binding site. His-248 is a catalytic residue. Substrate contacts are provided by Asp-250 and Asn-359. Residue Cys-365 is the Nucleophile of the active site.

This sequence belongs to the succinylarginine dihydrolase family. In terms of assembly, homodimer.

It carries out the reaction N(2)-succinyl-L-arginine + 2 H2O + 2 H(+) = N(2)-succinyl-L-ornithine + 2 NH4(+) + CO2. The protein operates within amino-acid degradation; L-arginine degradation via AST pathway; L-glutamate and succinate from L-arginine: step 2/5. Catalyzes the hydrolysis of N(2)-succinylarginine into N(2)-succinylornithine, ammonia and CO(2). In Salmonella agona (strain SL483), this protein is N-succinylarginine dihydrolase.